Reading from the N-terminus, the 1158-residue chain is MTLHAYLGRAGTGKSTKMLTEIKQKMKADPLGDPIILIAPTQSTFQLEQAFVNDPELNGSLRTEVLHFERLSHRIFQEVGSYSEQKLSKAATEMMIYNIVQEQQKYLKLYQSQAKYYGFSEKLTEQIQDFKKYAVTPEHLESFIADKNMQTRTKNKLEDIALIYREFEQRIQNEFITGEDALQYFIDCMPKSEWLKRADIYIDGFHNFSTIEYLIIKGLIKYAKSVTIILTTDGNHDQFSLFRKPSEVLRHIEEISNELNISIERQYFNQLYRFNNQDLKHLEQEFDALQINRVACQGHINILESATMREEINEIARRIIVDIRDKQLRYQDIAILYRDESYAYLFDSILPLYNIPYNIDTKRSMTHHPVMEMIRSLIEVIQSNWQINPMLRLLKTDVLTTSYLKSAYLVDLLENFVLERGIYGKRWLDDELFNVEHFSKMGRKAHKLTEDERNTFEQVVKLKKDVIDKILHFEKQMSQAATVKDFATAFYESMEYFELPNQLMTERDELDLNGNHEKAEEIDQIWNGLIQILDDLVLVFGDEPMSMERFLEVFDIGLEQLEFVMIPQTLDQVSIGTMDLAKVDNKQHVYLVGMNDGTMPQPVTASSLITDEEKKYFEQQANVELSPTSDILQMDEAFVCYVAMTRAKGNVTFSYSLMGSSGDDKEISPFLNQIQSLFNQLEITNIPQYHEVNPLSLMQHAKQTKITLFEALRAWLDDEIVADSWLDAYQVIRDSDHLSQGLDYLMSALTFDNETVKLGETLSKDLYGKEINASVSRFEGYQQCPFKHYASHGLKLNERTKYELQNFDLGDIFHSVLKYISERINGDFKQLDLKKIRQLTNEALEEILPKVQFNLLNSSAYYRYLSRRIGAIVETTLSALKYQGTYSKFMPKHFETSFRRKPRTNDELIAQTLTTTQGIPINIRGQIDRIDTYTKNDTSFVNIIDYKSSEGSATLDLTKVYYGMQMQMMTYMDIVLQNKQRLGLTDIVKPGGLLYFHVHEPRIKFKSWADIDEDKLEQDLIKKFKLSGLVNADQTVIDALDIRLEPKFTSDIVPVGLNKDGSLSKRGSQVADEATIYKFIQHNKENFIETASNIMDGHTEVAPLKYKQKLPCAFCSYQSVCHVDGMIDSKRYRTVDETINPIEAIQNININDEFGGEQ.

Positions 1–275 (MTLHAYLGRA…QYFNQLYRFN (275 aa)) constitute a UvrD-like helicase ATP-binding domain. 8-15 (GRAGTGKS) lines the ATP pocket. The region spanning 269–583 (NQLYRFNNQD…SIGTMDLAKV (315 aa)) is the UvrD-like helicase C-terminal domain. Positions 784, 1112, 1115, and 1121 each coordinate [4Fe-4S] cluster.

It belongs to the helicase family. AddB/RexB type 1 subfamily. As to quaternary structure, heterodimer of AddA and AddB. Mg(2+) is required as a cofactor. It depends on [4Fe-4S] cluster as a cofactor.

In terms of biological role, the heterodimer acts as both an ATP-dependent DNA helicase and an ATP-dependent, dual-direction single-stranded exonuclease. Recognizes the chi site generating a DNA molecule suitable for the initiation of homologous recombination. The AddB subunit has 5' -&gt; 3' nuclease activity but not helicase activity. This Staphylococcus aureus (strain MRSA252) protein is ATP-dependent helicase/deoxyribonuclease subunit B.